Reading from the N-terminus, the 214-residue chain is Coiled-coil domain-containing protein 169 (214 aa).

Residues 29–154 are a coiled coil; that stretch reads DAVQLSIFEL…NERRTYLAEM (126 aa). The span at 155–170 shows a compositional bias: polar residues; it reads SQGSGLHQVSKRQQVD. The disordered stretch occupies residues 155-214; that stretch reads SQGSGLHQVSKRQQVDQLPRMQENLVKTGRYNPAKQKTVSAKRGPVKKITRPNHLPELHP.

Belongs to the CCDC169 family.

The sequence is that of Coiled-coil domain-containing protein 169 (CCDC169) from Homo sapiens (Human).